A 320-amino-acid chain; its full sequence is Holliday junction branch migration complex subunit RuvB (320 aa).

The large ATPase domain (RuvB-L) stretch occupies residues 1 to 172 (MTANVCLDES…FGIISRLEYY (172 aa)). ATP contacts are provided by residues Arg-12, Gly-53, Lys-56, Thr-57, Thr-58, 119–121 (EDF), Arg-162, Tyr-172, and Arg-209. Position 57 (Thr-57) interacts with Mg(2+). Residues 173 to 243 (TPADLARIVA…LASEALGRME (71 aa)) form a small ATPAse domain (RuvB-S) region. Residues 246–320 (ESGLDQMDRK…KAYRHLNLLG (75 aa)) form a head domain (RuvB-H) region. Residues Arg-301 and Arg-306 each coordinate DNA.

The protein belongs to the RuvB family. As to quaternary structure, homohexamer. Forms an RuvA(8)-RuvB(12)-Holliday junction (HJ) complex. HJ DNA is sandwiched between 2 RuvA tetramers; dsDNA enters through RuvA and exits via RuvB. An RuvB hexamer assembles on each DNA strand where it exits the tetramer. Each RuvB hexamer is contacted by two RuvA subunits (via domain III) on 2 adjacent RuvB subunits; this complex drives branch migration. In the full resolvosome a probable DNA-RuvA(4)-RuvB(12)-RuvC(2) complex forms which resolves the HJ.

The protein localises to the cytoplasm. The catalysed reaction is ATP + H2O = ADP + phosphate + H(+). Functionally, the RuvA-RuvB-RuvC complex processes Holliday junction (HJ) DNA during genetic recombination and DNA repair, while the RuvA-RuvB complex plays an important role in the rescue of blocked DNA replication forks via replication fork reversal (RFR). RuvA specifically binds to HJ cruciform DNA, conferring on it an open structure. The RuvB hexamer acts as an ATP-dependent pump, pulling dsDNA into and through the RuvAB complex. RuvB forms 2 homohexamers on either side of HJ DNA bound by 1 or 2 RuvA tetramers; 4 subunits per hexamer contact DNA at a time. Coordinated motions by a converter formed by DNA-disengaged RuvB subunits stimulates ATP hydrolysis and nucleotide exchange. Immobilization of the converter enables RuvB to convert the ATP-contained energy into a lever motion, pulling 2 nucleotides of DNA out of the RuvA tetramer per ATP hydrolyzed, thus driving DNA branch migration. The RuvB motors rotate together with the DNA substrate, which together with the progressing nucleotide cycle form the mechanistic basis for DNA recombination by continuous HJ branch migration. Branch migration allows RuvC to scan DNA until it finds its consensus sequence, where it cleaves and resolves cruciform DNA. This is Holliday junction branch migration complex subunit RuvB from Nitratidesulfovibrio vulgaris (strain ATCC 29579 / DSM 644 / CCUG 34227 / NCIMB 8303 / VKM B-1760 / Hildenborough) (Desulfovibrio vulgaris).